The sequence spans 675 residues: Methionine--tRNA ligase (675 aa).

The 'HIGH' region signature appears at 15-25; the sequence is PYANGSIHLGH. 4 residues coordinate Zn(2+): Cys-146, Cys-149, Cys-159, and Cys-162. Positions 332 to 336 match the 'KMSKS' region motif; the sequence is KMSKS. Lys-335 lines the ATP pocket. Residues 573-675 form the tRNA-binding domain; the sequence is DFAKIDMRIA…SGAKPGHQVK (103 aa).

This sequence belongs to the class-I aminoacyl-tRNA synthetase family. MetG type 1 subfamily. Homodimer. It depends on Zn(2+) as a cofactor.

It is found in the cytoplasm. The enzyme catalyses tRNA(Met) + L-methionine + ATP = L-methionyl-tRNA(Met) + AMP + diphosphate. In terms of biological role, is required not only for elongation of protein synthesis but also for the initiation of all mRNA translation through initiator tRNA(fMet) aminoacylation. The chain is Methionine--tRNA ligase from Proteus mirabilis (strain HI4320).